A 173-amino-acid polypeptide reads, in one-letter code: Large ribosomal subunit protein uL10 (173 aa).

This sequence belongs to the universal ribosomal protein uL10 family. As to quaternary structure, part of the ribosomal stalk of the 50S ribosomal subunit. The N-terminus interacts with L11 and the large rRNA to form the base of the stalk. The C-terminus forms an elongated spine to which L12 dimers bind in a sequential fashion forming a multimeric L10(L12)X complex.

Functionally, forms part of the ribosomal stalk, playing a central role in the interaction of the ribosome with GTP-bound translation factors. This chain is Large ribosomal subunit protein uL10, found in Acidithiobacillus ferrooxidans (strain ATCC 23270 / DSM 14882 / CIP 104768 / NCIMB 8455) (Ferrobacillus ferrooxidans (strain ATCC 23270)).